Reading from the N-terminus, the 453-residue chain is Bifunctional protein GlmU (453 aa).

A pyrophosphorylase region spans residues 1–226 (MKFSAVILAA…AIEVEGVNDR (226 aa)). Residues 8–11 (LAAG), lysine 22, glutamine 73, 78–79 (GT), 100–102 (YGD), glycine 137, glutamate 151, asparagine 166, and asparagine 224 each bind UDP-N-acetyl-alpha-D-glucosamine. Aspartate 102 is a binding site for Mg(2+). Asparagine 224 contacts Mg(2+). Residues 227–247 (AQLARLERAFQSMQAQKLLEQ) form a linker region. Positions 248–453 (GVMLRDPARF…TGWQRPVKQK (206 aa)) are N-acetyltransferase. Arginine 330 and lysine 348 together coordinate UDP-N-acetyl-alpha-D-glucosamine. Residue histidine 360 is the Proton acceptor of the active site. Positions 363 and 374 each coordinate UDP-N-acetyl-alpha-D-glucosamine. Acetyl-CoA is bound by residues alanine 377, 383 to 384 (NY), serine 402, alanine 420, and arginine 437.

This sequence in the N-terminal section; belongs to the N-acetylglucosamine-1-phosphate uridyltransferase family. It in the C-terminal section; belongs to the transferase hexapeptide repeat family. In terms of assembly, homotrimer. It depends on Mg(2+) as a cofactor.

It is found in the cytoplasm. The catalysed reaction is alpha-D-glucosamine 1-phosphate + acetyl-CoA = N-acetyl-alpha-D-glucosamine 1-phosphate + CoA + H(+). The enzyme catalyses N-acetyl-alpha-D-glucosamine 1-phosphate + UTP + H(+) = UDP-N-acetyl-alpha-D-glucosamine + diphosphate. The protein operates within nucleotide-sugar biosynthesis; UDP-N-acetyl-alpha-D-glucosamine biosynthesis; N-acetyl-alpha-D-glucosamine 1-phosphate from alpha-D-glucosamine 6-phosphate (route II): step 2/2. It functions in the pathway nucleotide-sugar biosynthesis; UDP-N-acetyl-alpha-D-glucosamine biosynthesis; UDP-N-acetyl-alpha-D-glucosamine from N-acetyl-alpha-D-glucosamine 1-phosphate: step 1/1. Its pathway is bacterial outer membrane biogenesis; LPS lipid A biosynthesis. In terms of biological role, catalyzes the last two sequential reactions in the de novo biosynthetic pathway for UDP-N-acetylglucosamine (UDP-GlcNAc). The C-terminal domain catalyzes the transfer of acetyl group from acetyl coenzyme A to glucosamine-1-phosphate (GlcN-1-P) to produce N-acetylglucosamine-1-phosphate (GlcNAc-1-P), which is converted into UDP-GlcNAc by the transfer of uridine 5-monophosphate (from uridine 5-triphosphate), a reaction catalyzed by the N-terminal domain. This is Bifunctional protein GlmU from Vibrio campbellii (strain ATCC BAA-1116).